The primary structure comprises 190 residues: Imidazoleglycerol-phosphate dehydratase (190 aa).

This sequence belongs to the imidazoleglycerol-phosphate dehydratase family.

The protein localises to the cytoplasm. It catalyses the reaction D-erythro-1-(imidazol-4-yl)glycerol 3-phosphate = 3-(imidazol-4-yl)-2-oxopropyl phosphate + H2O. The protein operates within amino-acid biosynthesis; L-histidine biosynthesis; L-histidine from 5-phospho-alpha-D-ribose 1-diphosphate: step 6/9. The chain is Imidazoleglycerol-phosphate dehydratase from Nitratiruptor sp. (strain SB155-2).